We begin with the raw amino-acid sequence, 77 residues long: Translation initiation factor IF-1, chloroplastic (77 aa).

The region spanning 1–71 (MKRQKWIHEG…TRGRIIYRLR (71 aa)) is the S1-like domain.

The protein belongs to the IF-1 family. As to quaternary structure, component of the 30S ribosomal translation pre-initiation complex which assembles on the 30S ribosome in the order IF-2 and IF-3, IF-1 and N-formylmethionyl-tRNA(fMet); mRNA recruitment can occur at any time during PIC assembly.

It is found in the plastid. The protein resides in the chloroplast. In terms of biological role, one of the essential components for the initiation of protein synthesis. Stabilizes the binding of IF-2 and IF-3 on the 30S subunit to which N-formylmethionyl-tRNA(fMet) subsequently binds. Helps modulate mRNA selection, yielding the 30S pre-initiation complex (PIC). Upon addition of the 50S ribosomal subunit IF-1, IF-2 and IF-3 are released leaving the mature 70S translation initiation complex. This is Translation initiation factor IF-1, chloroplastic from Leucophyllum frutescens (Texas ranger).